The following is a 323-amino-acid chain: MSALPPAIFLMGPTAAGKTDLAIELTKVLPCELISVDSALVYRDMDIGTAKPSKALLAQYPHKLIDIIDPAESYSAADFRTDALAAMAEITARGNIPLLVGGTMLYYKALQEGLADMPAADAQVRAELEEEAARLGWQALHDQLAAIDPVSAARIHPNDPQRLSRALEVWRVSGQTMTEHRLKQSAQSADAGASGQSQLPYTVANLAIAPANRQVLHERIAQRFTIMLEQGFVDEVVALRSRGDLHPGLPSIRAVGYRQVWDHLDGKLTSAEMQERGIIATRQLAKRQFTWLRSWSDLHWLDSLDSDNLSRALKYLGTVSILS.

12–19 (GPTAAGKT) serves as a coordination point for ATP. 14–19 (TAAGKT) contacts substrate. Interaction with substrate tRNA regions lie at residues 37–40 (DSAL) and 161–165 (QRLSR).

This sequence belongs to the IPP transferase family. As to quaternary structure, monomer. Mg(2+) is required as a cofactor.

It catalyses the reaction adenosine(37) in tRNA + dimethylallyl diphosphate = N(6)-dimethylallyladenosine(37) in tRNA + diphosphate. Functionally, catalyzes the transfer of a dimethylallyl group onto the adenine at position 37 in tRNAs that read codons beginning with uridine, leading to the formation of N6-(dimethylallyl)adenosine (i(6)A). In Pseudomonas fluorescens (strain SBW25), this protein is tRNA dimethylallyltransferase.